The sequence spans 91 residues: Small ribosomal subunit protein uS19 (91 aa).

Belongs to the universal ribosomal protein uS19 family.

Protein S19 forms a complex with S13 that binds strongly to the 16S ribosomal RNA. This is Small ribosomal subunit protein uS19 from Psychrobacter arcticus (strain DSM 17307 / VKM B-2377 / 273-4).